The following is a 349-amino-acid chain: tRNA pseudouridine synthase D (349 aa).

Phe26 provides a ligand contact to substrate. Residue Asp79 is the Nucleophile of the active site. Asn128 lines the substrate pocket. The region spanning 154–302 (GVPNYFGSQR…VEGSRRAVLL (149 aa)) is the TRUD domain. Phe328 contributes to the substrate binding site.

This sequence belongs to the pseudouridine synthase TruD family.

It catalyses the reaction uridine(13) in tRNA = pseudouridine(13) in tRNA. Responsible for synthesis of pseudouridine from uracil-13 in transfer RNAs. In Yersinia pestis bv. Antiqua (strain Antiqua), this protein is tRNA pseudouridine synthase D.